The following is a 135-amino-acid chain: uncharacterized protein (135 aa).

One can recognise an HTH hxlR-type domain in the interval 25-123; sequence CPIQHVVDLL…LGSDWLEQES (99 aa).

This is an uncharacterized protein from Synechocystis sp. (strain ATCC 27184 / PCC 6803 / Kazusa).